Consider the following 275-residue polypeptide: Exosome complex component Rrp42 (275 aa).

Belongs to the RNase PH family. Rrp42 subfamily. As to quaternary structure, component of the archaeal exosome complex. Forms a hexameric ring-like arrangement composed of 3 Rrp41-Rrp42 heterodimers. The hexameric ring associates with a trimer of Rrp4 and/or Csl4 subunits.

It is found in the cytoplasm. In terms of biological role, non-catalytic component of the exosome, which is a complex involved in RNA degradation. Contributes to the structuring of the Rrp41 active site. The polypeptide is Exosome complex component Rrp42 (Sulfurisphaera tokodaii (strain DSM 16993 / JCM 10545 / NBRC 100140 / 7) (Sulfolobus tokodaii)).